A 230-amino-acid polypeptide reads, in one-letter code: RNA chaperone ProQ (230 aa).

Residues Glu-105–Gly-125 are compositionally biased toward basic and acidic residues. A disordered region spans residues Glu-105 to Thr-182. Residues Pro-154 to Arg-167 are compositionally biased toward low complexity. Residues Ala-168–Val-178 are compositionally biased toward basic and acidic residues.

This sequence belongs to the ProQ family.

Its subcellular location is the cytoplasm. RNA chaperone with significant RNA binding, RNA strand exchange and RNA duplexing activities. May regulate ProP activity through an RNA-based, post-transcriptional mechanism. This Erwinia tasmaniensis (strain DSM 17950 / CFBP 7177 / CIP 109463 / NCPPB 4357 / Et1/99) protein is RNA chaperone ProQ.